The sequence spans 536 residues: Chaperonin GroEL (536 aa).

ATP is bound by residues 30–33 (TLGP), 86–90 (DGTTT), G414, and D494.

It belongs to the chaperonin (HSP60) family. Forms a cylinder of 14 subunits composed of two heptameric rings stacked back-to-back. Interacts with the co-chaperonin GroES.

The protein resides in the cytoplasm. The catalysed reaction is ATP + H2O + a folded polypeptide = ADP + phosphate + an unfolded polypeptide.. Its function is as follows. Together with its co-chaperonin GroES, plays an essential role in assisting protein folding. The GroEL-GroES system forms a nano-cage that allows encapsulation of the non-native substrate proteins and provides a physical environment optimized to promote and accelerate protein folding. The sequence is that of Chaperonin GroEL from Methanospirillum hungatei JF-1 (strain ATCC 27890 / DSM 864 / NBRC 100397 / JF-1).